Here is a 248-residue protein sequence, read N- to C-terminus: Probable capsular polysaccharide biosynthesis protein YwqC (248 aa).

2 consecutive transmembrane segments (helical) span residues 18 to 38 (ILLI…ISFF) and 174 to 194 (LLNI…LAFL).

Belongs to the CpsC/CapA family. In terms of processing, not phosphorylated in vitro by YwqD.

It localises to the cell membrane. It participates in capsule biogenesis; capsule polysaccharide biosynthesis. Functionally, required for YwqD kinase activity. May bring YwqD and its substrates into contact. Probably involved in the regulation of capsular polysaccharide biosynthesis. The polypeptide is Probable capsular polysaccharide biosynthesis protein YwqC (ywqC) (Bacillus subtilis (strain 168)).